The primary structure comprises 765 residues: Protein transport protein Sec23A (765 aa).

Thr2 is modified (N-acetylthreonine). Zn(2+) is bound by residues Cys61, Cys66, Cys85, and Cys88. Thr308 is subject to Phosphothreonine. Residues 632-718 (PEPVLLDSSS…EHGGSQARFL (87 aa)) form a Gelsolin-like repeat.

It belongs to the SEC23/SEC24 family. SEC23 subfamily. As to quaternary structure, COPII is composed of at least five proteins: the Sec23/24 complex, the Sec13/31 complex and Sar1. Interacts with SEC23IP. Interacts with HTR4. Interacts with SEC16A. Interacts with SLC6A4. Interacts (as part of the Sec23/24 complex) with SEC22B; recruits SEC22B into COPII-coated vesicles and allows the transport of this cargo from the endoplasmic reticulum to the Golgi. Interacts (via Gelsolin-like repeat) with MIA2 and MIA3; specifically involved in the transport of large cargos like the collagen COL7A1. Interacts with DDHD1. Interacts with TMEM39A. Interacts with SACM1L; this interaction is reduced in the absence of TMEM39A. Interacts with kinase FAM20C; transport of FAM20C from the endoplasmic reticulum to the Golgi is likely to be mediated by COPII vesicles.

The protein resides in the cytoplasmic vesicle. It is found in the COPII-coated vesicle membrane. It localises to the endoplasmic reticulum membrane. Its subcellular location is the cytoplasm. The protein localises to the cytosol. Functionally, component of the coat protein complex II (COPII) which promotes the formation of transport vesicles from the endoplasmic reticulum (ER). The coat has two main functions, the physical deformation of the endoplasmic reticulum membrane into vesicles and the selection of cargo molecules for their transport to the Golgi complex. Required for the translocation of insulin-induced glucose transporter SLC2A4/GLUT4 to the cell membrane. The sequence is that of Protein transport protein Sec23A from Pongo abelii (Sumatran orangutan).